The primary structure comprises 545 residues: Chaperonin GroEL 1 (545 aa).

ATP contacts are provided by residues 30 to 33 (TLGP), Lys-51, 87 to 91 (DGTTT), Gly-415, and Asp-495.

This sequence belongs to the chaperonin (HSP60) family. Forms a cylinder of 14 subunits composed of two heptameric rings stacked back-to-back. Interacts with the co-chaperonin GroES.

It is found in the cytoplasm. The catalysed reaction is ATP + H2O + a folded polypeptide = ADP + phosphate + an unfolded polypeptide.. Together with its co-chaperonin GroES, plays an essential role in assisting protein folding. The GroEL-GroES system forms a nano-cage that allows encapsulation of the non-native substrate proteins and provides a physical environment optimized to promote and accelerate protein folding. The polypeptide is Chaperonin GroEL 1 (Rhizobium etli (strain ATCC 51251 / DSM 11541 / JCM 21823 / NBRC 15573 / CFN 42)).